Consider the following 106-residue polypeptide: Thioredoxin (106 aa).

The region spanning 1 to 106 (GATVKVTNAT…RLAAFLDASL (106 aa)) is the Thioredoxin domain. Cysteines 31 and 34 form a disulfide.

It belongs to the thioredoxin family.

Participates in various redox reactions through the reversible oxidation of its active center dithiol to a disulfide and catalyzes dithiol-disulfide exchange reactions. This Kitasatospora aureofaciens (Streptomyces aureofaciens) protein is Thioredoxin (trxA).